Consider the following 167-residue polypeptide: Calcium-binding protein CML19 (167 aa).

EF-hand domains follow at residues 23-58 (QKRR…LGFE), 59-94 (MNNQ…KFGE), 96-131 (DSID…LGEN), and 132-167 (FTDN…TSYG). Positions 36, 38, 40, 42, 47, 72, 74, 76, 83, 109, 111, 113, 115, 120, 145, 147, 149, 151, and 156 each coordinate Ca(2+).

The protein belongs to the centrin family. As to quaternary structure, interacts with RAD4. Calcium is required for this interaction. Interacts with SAC3B. Expressed in leaves, roots, and at lower level in stems. Barely detectable in flower buds and flowers.

It localises to the cytoplasm. Its subcellular location is the nucleus. Its function is as follows. Potential calcium sensor that binds calcium in vitro. Modulates homologous recombination and nucleotide excision repair (NER). Involved in the early response to UV irradiation. This chain is Calcium-binding protein CML19, found in Arabidopsis thaliana (Mouse-ear cress).